Consider the following 279-residue polypeptide: Shikimate dehydrogenase (NADP(+)) (279 aa).

Residues 21-23 (SMS) and Thr68 each bind shikimate. The active-site Proton acceptor is the Lys72. Residues Asn93 and Asp108 each coordinate shikimate. NADP(+) is bound by residues 130–134 (GAGGA) and Leu219. Tyr221 lines the shikimate pocket. Gly242 contacts NADP(+).

Belongs to the shikimate dehydrogenase family. Homodimer.

The catalysed reaction is shikimate + NADP(+) = 3-dehydroshikimate + NADPH + H(+). Its pathway is metabolic intermediate biosynthesis; chorismate biosynthesis; chorismate from D-erythrose 4-phosphate and phosphoenolpyruvate: step 4/7. Involved in the biosynthesis of the chorismate, which leads to the biosynthesis of aromatic amino acids. Catalyzes the reversible NADPH linked reduction of 3-dehydroshikimate (DHSA) to yield shikimate (SA). In Oleidesulfovibrio alaskensis (strain ATCC BAA-1058 / DSM 17464 / G20) (Desulfovibrio alaskensis), this protein is Shikimate dehydrogenase (NADP(+)).